The following is a 919-amino-acid chain: Kinesin-like protein KIN-6 (919 aa).

The interval 1–59 (MVRLSTKPPNPKVEMNLKEPPITGAGAGAAASPPAPSTLRRNPPRSARPPPTPLPNSKP) is disordered. The segment covering 28 to 45 (GAAASPPAPSTLRRNPPR) has biased composition (low complexity). The segment covering 46 to 56 (SARPPPTPLPN) has biased composition (pro residues). Residues 72–415 (RLKVFLRIRP…LRQASPYMKI (344 aa)) enclose the Kinesin motor domain. 171–178 (GPTGSGKT) lines the ATP pocket. Disordered regions lie at residues 591 to 615 (EEVS…TGTG), 674 to 700 (SESC…SFTD), 711 to 730 (SPQF…EEER), 737 to 764 (TTEG…EVNS), and 886 to 919 (KEEK…GRAQ). The segment covering 597 to 612 (STGHGPERSSDYDDKT) has biased composition (basic and acidic residues). Over residues 685-697 (HSSSSLDHPSDQS) the composition is skewed to low complexity. A compositionally biased stretch (polar residues) spans 755-764 (TPSCSQEVNS). Residues 886 to 912 (KEEKVKSSRDAMGRSDKLIRLLTDHPP) show a composition bias toward basic and acidic residues.

Belongs to the TRAFAC class myosin-kinesin ATPase superfamily. Kinesin family. KIN-6 subfamily.

The protein is Kinesin-like protein KIN-6 of Oryza sativa subsp. japonica (Rice).